The sequence spans 153 residues: D-aminoacyl-tRNA deacylase (153 aa).

A Gly-cisPro motif, important for rejection of L-amino acids motif is present at residues 137-138 (GP).

The protein belongs to the DTD family. As to quaternary structure, homodimer.

It localises to the cytoplasm. The enzyme catalyses glycyl-tRNA(Ala) + H2O = tRNA(Ala) + glycine + H(+). It catalyses the reaction a D-aminoacyl-tRNA + H2O = a tRNA + a D-alpha-amino acid + H(+). Its function is as follows. An aminoacyl-tRNA editing enzyme that deacylates mischarged D-aminoacyl-tRNAs. Also deacylates mischarged glycyl-tRNA(Ala), protecting cells against glycine mischarging by AlaRS. Acts via tRNA-based rather than protein-based catalysis; rejects L-amino acids rather than detecting D-amino acids in the active site. By recycling D-aminoacyl-tRNA to D-amino acids and free tRNA molecules, this enzyme counteracts the toxicity associated with the formation of D-aminoacyl-tRNA entities in vivo and helps enforce protein L-homochirality. This chain is D-aminoacyl-tRNA deacylase, found in Myxococcus xanthus (strain DK1622).